The sequence spans 504 residues: L-carnitine/gamma-butyrobetaine antiporter (504 aa).

12 helical membrane-spanning segments follow: residues 10–30, 51–71, 92–112, 143–163, 195–215, 231–251, 263–283, 316–336, 347–367, 398–418, 446–466, and 475–495; these read IEPKVFFPPLIIVGILCWLTV, WGWAFEWYMVVMLFGWFWLVF, IFMMFASCTSAAVLFWGSIEI, GPLPWATYSFLSVAFAYFFFV, FYLVALIFAMGTSLGLATPLV, LDAIIITCWIILHAICVACGL, SYLSFLMLGWVFIVSGASFIM, WTVFYWAWWVIYAIQMSIFLA, LCFGMVMGLTASTWILWTVLG, WAALPLSTATMWGFFILCFIA, LLVRIGWSILVGIIGIVLLAL, and AIIAGGCPLFFVNIMVTLSFI.

The protein belongs to the BCCT transporter (TC 2.A.15) family. CaiT subfamily. Homotrimer.

Its subcellular location is the cell inner membrane. The catalysed reaction is 4-(trimethylamino)butanoate(in) + (R)-carnitine(out) = 4-(trimethylamino)butanoate(out) + (R)-carnitine(in). Its pathway is amine and polyamine metabolism; carnitine metabolism. Catalyzes the exchange of L-carnitine for gamma-butyrobetaine. The polypeptide is L-carnitine/gamma-butyrobetaine antiporter (Shigella flexneri serotype 5b (strain 8401)).